The sequence spans 734 residues: Subtilisin-like protease (734 aa).

Residues 1–20 form the signal peptide; the sequence is MTCICIFSIAFLLSFHLTTA. The region spanning 28–109 is the Inhibitor I9 domain; the sequence is TYIVHVDKPD…AKLEKVLTLH (82 aa). Residues 114–591 form the Peptidase S8 domain; sequence PNFLGLYQNM…AGHVNPSKAS (478 aa). The active-site Charge relay system is Asp141. Asn172 carries an N-linked (GlcNAc...) asparagine glycan. The active-site Charge relay system is His199. N-linked (GlcNAc...) asparagine glycans are attached at residues Asn222 and Asn306. The PA domain occupies 357–442; it reads PLVYPGTSDE…THVGYAAGEM (86 aa). Asn448 and Asn509 each carry an N-linked (GlcNAc...) asparagine glycan. The active-site Charge relay system is the Ser524. The N-linked (GlcNAc...) asparagine glycan is linked to Asn652.

Belongs to the peptidase S8 family.

The protein localises to the secreted. The protein resides in the extracellular space. It localises to the apoplast. Functionally, required for arbuscular mycorrhiza (AM) development during AM symbiosis with AM fungi (e.g. Glomeromycota intraradices). In Petunia hybrida (Petunia), this protein is Subtilisin-like protease.